Consider the following 491-residue polypeptide: Protein nucleotidyltransferase YdiU (491 aa).

ATP contacts are provided by glycine 94, glycine 96, arginine 97, lysine 117, aspartate 129, glycine 130, arginine 180, and arginine 187. The Proton acceptor role is filled by aspartate 256. Residues asparagine 257 and aspartate 266 each contribute to the Mg(2+) site. An ATP-binding site is contributed by aspartate 266.

Belongs to the SELO family. Mg(2+) is required as a cofactor. It depends on Mn(2+) as a cofactor.

It carries out the reaction L-seryl-[protein] + ATP = 3-O-(5'-adenylyl)-L-seryl-[protein] + diphosphate. The enzyme catalyses L-threonyl-[protein] + ATP = 3-O-(5'-adenylyl)-L-threonyl-[protein] + diphosphate. It catalyses the reaction L-tyrosyl-[protein] + ATP = O-(5'-adenylyl)-L-tyrosyl-[protein] + diphosphate. The catalysed reaction is L-histidyl-[protein] + UTP = N(tele)-(5'-uridylyl)-L-histidyl-[protein] + diphosphate. It carries out the reaction L-seryl-[protein] + UTP = O-(5'-uridylyl)-L-seryl-[protein] + diphosphate. The enzyme catalyses L-tyrosyl-[protein] + UTP = O-(5'-uridylyl)-L-tyrosyl-[protein] + diphosphate. Nucleotidyltransferase involved in the post-translational modification of proteins. It can catalyze the addition of adenosine monophosphate (AMP) or uridine monophosphate (UMP) to a protein, resulting in modifications known as AMPylation and UMPylation. In Bacillus cytotoxicus (strain DSM 22905 / CIP 110041 / 391-98 / NVH 391-98), this protein is Protein nucleotidyltransferase YdiU.